We begin with the raw amino-acid sequence, 243 residues long: Cell surface glycoprotein CD200 receptor 1-B (243 aa).

Residues 1 to 29 lie on the Cytoplasmic side of the membrane; it reads MEISQQAGWCKKPASPMNTRAALEAVRNT. Residues 30 to 47 form a helical; Signal-anchor for type II membrane protein membrane-spanning segment; sequence AWTIVLLTSAAVMGASGI. Residues 47–146 enclose the Ig-like V-type domain; that stretch reads ISRVSANLGH…GNFHYLYHLT (100 aa). Residues 48-243 lie on the Lumenal side of the membrane; it reads SRVSANLGHS…LAQLPGGSAP (196 aa). Intrachain disulfides connect Cys-62–Cys-130 and Cys-165–Cys-214. N-linked (GlcNAc...) asparagine glycosylation is found at Asn-64, Asn-67, Asn-127, Asn-193, Asn-222, and Asn-228. The region spanning 144 to 228 is the Ig-like C2-type domain; that stretch reads HLTVLVAPRM…ATLNETRSIN (85 aa).

Belongs to the CD200R family. In terms of tissue distribution, expressed in peripheral blood lymphocytes (PBL) and peripheral blood mononuclear cells (PBMC).

It is found in the membrane. The polypeptide is Cell surface glycoprotein CD200 receptor 1-B (CD200R1B) (Gallus gallus (Chicken)).